A 301-amino-acid polypeptide reads, in one-letter code: Mitochondrial thiamine pyrophosphate carrier 1 (301 aa).

Solcar repeat units follow at residues 15–102 (VTPT…ISKS), 115–200 (SSAN…AREL), and 206–293 (RVPF…SLSF). The next 6 helical transmembrane spans lie at 20-38 (ALVAGSIAGAISRAFTAPL), 79-99 (VPAEILYILYGGVQFGSYSII), 121-141 (LIVGIGSGIVSTLVTYPFDLL), 172-192 (IYAGIRPAMLSVSSTTGLMFW), 207-227 (VPFIEAICGFIAGATSKGITF), and 252-272 (IFVTILKNEGVFGLYKGFGIS).

It belongs to the mitochondrial carrier (TC 2.A.29) family.

The protein localises to the mitochondrion inner membrane. Its function is as follows. Mitochondrial transporter that mediates uptake of thiamine pyrophosphate (ThPP) into mitochondria. This chain is Mitochondrial thiamine pyrophosphate carrier 1 (TPC1), found in Candida albicans (strain SC5314 / ATCC MYA-2876) (Yeast).